Consider the following 258-residue polypeptide: Ribonuclease HII (258 aa).

Residues 71–258 (QLIAGIDEVG…PIKTMVNFKS (188 aa)) form the RNase H type-2 domain. A divalent metal cation contacts are provided by Asp-77, Glu-78, and Asp-169.

This sequence belongs to the RNase HII family. Mn(2+) serves as cofactor. Requires Mg(2+) as cofactor.

The protein localises to the cytoplasm. It catalyses the reaction Endonucleolytic cleavage to 5'-phosphomonoester.. Endonuclease that specifically degrades the RNA of RNA-DNA hybrids. The sequence is that of Ribonuclease HII (rnhB) from Lactococcus lactis subsp. lactis (strain IL1403) (Streptococcus lactis).